The primary structure comprises 1190 residues: ATPase histone chaperone abo1 (1190 aa).

A compositionally biased stretch (basic and acidic residues) spans 1-11 (MKEEASEHGGS). Disordered regions lie at residues 1–185 (MKEE…RKTH) and 204–253 (YIDS…DLAD). 2 stretches are compositionally biased toward acidic residues: residues 52–62 (QEDEGDEDWEE) and 82–106 (SEGD…DSED). Positions 112-131 (VRSKPKYKPGTRRSTRLRNR) are enriched in basic residues. A compositionally biased stretch (basic and acidic residues) spans 141-152 (EEHRPILRERTS). ATP is bound at residue 309 to 314 (PGTGKT). The region spanning 794–922 (RLLNKLKIKL…ANVLLGVEDM (129 aa)) is the Bromo domain.

It belongs to the AAA ATPase family. Homohexamer. Interacts with the FACT complex subunits spt16 and pob3. Interacts with histone H3-H4 (via N-terminus).

It is found in the nucleus. It localises to the chromosome. It catalyses the reaction ATP + H2O = ADP + phosphate + H(+). In terms of biological role, ATPase histone chaperone which facilitates loading of histone H3-H4 onto DNA in an ATP-dependent manner. Plays a genome-wide role in nucleosome organization and establishment of chromatin. Also plays a role in heterochromatin assembly by stabilizing recruitment of the histone methyltransferase clr4 to methylated histone H3, to promote the transition from H3K9me2 to H3K9me3. The polypeptide is ATPase histone chaperone abo1 (Schizosaccharomyces pombe (strain 972 / ATCC 24843) (Fission yeast)).